Consider the following 395-residue polypeptide: Elongation factor Tu (395 aa).

A tr-type G domain is found at K10–V204. The interval G19–T26 is G1. G19–T26 contributes to the GTP binding site. T26 contributes to the Mg(2+) binding site. The tract at residues G60–N64 is G2. A G3 region spans residues D81–G84. GTP is bound by residues D81 to H85 and N136 to D139. The segment at N136–D139 is G4. The tract at residues S174–L176 is G5.

This sequence belongs to the TRAFAC class translation factor GTPase superfamily. Classic translation factor GTPase family. EF-Tu/EF-1A subfamily. As to quaternary structure, monomer.

The protein localises to the cytoplasm. It catalyses the reaction GTP + H2O = GDP + phosphate + H(+). In terms of biological role, GTP hydrolase that promotes the GTP-dependent binding of aminoacyl-tRNA to the A-site of ribosomes during protein biosynthesis. In Lactiplantibacillus plantarum (strain ATCC BAA-793 / NCIMB 8826 / WCFS1) (Lactobacillus plantarum), this protein is Elongation factor Tu.